Consider the following 338-residue polypeptide: Ketol-acid reductoisomerase (NADP(+)) (338 aa).

In terms of domain architecture, KARI N-terminal Rossmann spans 1 to 181; that stretch reads MKVFYDKDCD…GGGKAGIIET (181 aa). NADP(+)-binding positions include 24–27, Arg47, and Ser52; that span reads YGSQ. His107 is an active-site residue. Gly133 provides a ligand contact to NADP(+). The KARI C-terminal knotted domain maps to 182–327; that stretch reads NFKEETETDL…AQLRAMMPWI (146 aa). 4 residues coordinate Mg(2+): Asp190, Glu194, Glu226, and Glu230. A substrate-binding site is contributed by Ser251.

Belongs to the ketol-acid reductoisomerase family. The cofactor is Mg(2+).

The catalysed reaction is (2R)-2,3-dihydroxy-3-methylbutanoate + NADP(+) = (2S)-2-acetolactate + NADPH + H(+). It carries out the reaction (2R,3R)-2,3-dihydroxy-3-methylpentanoate + NADP(+) = (S)-2-ethyl-2-hydroxy-3-oxobutanoate + NADPH + H(+). It participates in amino-acid biosynthesis; L-isoleucine biosynthesis; L-isoleucine from 2-oxobutanoate: step 2/4. The protein operates within amino-acid biosynthesis; L-valine biosynthesis; L-valine from pyruvate: step 2/4. Its function is as follows. Involved in the biosynthesis of branched-chain amino acids (BCAA). Catalyzes an alkyl-migration followed by a ketol-acid reduction of (S)-2-acetolactate (S2AL) to yield (R)-2,3-dihydroxy-isovalerate. In the isomerase reaction, S2AL is rearranged via a Mg-dependent methyl migration to produce 3-hydroxy-3-methyl-2-ketobutyrate (HMKB). In the reductase reaction, this 2-ketoacid undergoes a metal-dependent reduction by NADPH to yield (R)-2,3-dihydroxy-isovalerate. The protein is Ketol-acid reductoisomerase (NADP(+)) of Paracidovorax citrulli (strain AAC00-1) (Acidovorax citrulli).